The following is a 393-amino-acid chain: G protein-activated inward rectifier potassium channel 3 (393 aa).

The interval 1–23 is disordered; that stretch reads MAQENAAFSPGSEEPPRRRGRQR. The Cytoplasmic portion of the chain corresponds to 1–57; it reads MAQENAAFSPGSEEPPRRRGRQRYVEKDGRCNVQQGNVRETYRYLTDLFTTLVDLQW. A helical transmembrane segment spans residues 58–82; the sequence is RLSLLFFVLAYALTWLFFGAIWWLI. The Extracellular portion of the chain corresponds to 83–106; sequence AYGRGDLEHLEDTAWTPCVNNLNG. The segment at residues 107–118 is an intramembrane region (helical; Pore-forming); sequence FVAAFLFSIETE. The pore-forming intramembrane region spans 119 to 125; the sequence is TTIGYGH. The Selectivity filter motif lies at 120 to 125; it reads TIGYGH. The Extracellular portion of the chain corresponds to 126–134; that stretch reads RVITDQCPE. The chain crosses the membrane as a helical span at residues 135 to 156; sequence GIVLLLLQAILGSMVNAFMVGC. The Cytoplasmic segment spans residues 157–393; it reads MFVKISQPNK…LPPPESESKV (237 aa). A disordered region spans residues 360 to 393; the sequence is KVEEEGAGEGAGAGDGADKEQNGCLPPPESESKV. Residues 384-393 are compositionally biased toward pro residues; the sequence is LPPPESESKV. The PDZ-binding motif lies at 390-393; the sequence is ESKV.

The protein belongs to the inward rectifier-type potassium channel (TC 1.A.2.1) family. KCNJ9 subfamily. Associates with KCNJ3/GIRK1 to form a G-protein-activated heteromultimer pore-forming unit. Interacts (via PDZ-binding motif) with SNX27 (via PDZ domain); the interaction is required when endocytosed to prevent degradation in lysosomes and promote recycling to the plasma membrane.

It localises to the membrane. The enzyme catalyses K(+)(in) = K(+)(out). This receptor is controlled by G proteins. Inward rectifier potassium channels are characterized by a greater tendency to allow potassium to flow into the cell rather than out of it. Their voltage dependence is regulated by the concentration of extracellular potassium; as external potassium is raised, the voltage range of the channel opening shifts to more positive voltages. The inward rectification is mainly due to the blockage of outward current by internal magnesium. Unable to produce channel activity when expressed alone but forms a functional channel in association with KCNJ3/GIRK1. This chain is G protein-activated inward rectifier potassium channel 3 (Kcnj9), found in Rattus norvegicus (Rat).